A 299-amino-acid chain; its full sequence is 33 kDa chaperonin (299 aa).

Intrachain disulfides connect Cys-239-Cys-241 and Cys-272-Cys-275.

Belongs to the HSP33 family. In terms of processing, under oxidizing conditions two disulfide bonds are formed involving the reactive cysteines. Under reducing conditions zinc is bound to the reactive cysteines and the protein is inactive.

Its subcellular location is the cytoplasm. In terms of biological role, redox regulated molecular chaperone. Protects both thermally unfolding and oxidatively damaged proteins from irreversible aggregation. Plays an important role in the bacterial defense system toward oxidative stress. The chain is 33 kDa chaperonin from Acaryochloris marina (strain MBIC 11017).